The chain runs to 213 residues: uncharacterized protein (213 aa).

S-adenosyl-L-methionine is bound by residues Gly-53, Glu-74, and Asp-97.

This sequence belongs to the methyltransferase superfamily. YrrT family.

Functionally, could be a S-adenosyl-L-methionine-dependent methyltransferase. This is an uncharacterized protein from Geobacillus sp. (strain WCH70).